Here is an 854-residue protein sequence, read N- to C-terminus: Lysine-specific demethylase 3 (854 aa).

The interval 64 to 88 (QRVQQEEESLGQVPPLTEEEQQRHD) is disordered. Positions 601–806 (LRTGNLNIAS…HCYHLTHEFR (206 aa)) constitute a JmjC domain. Fe cation is bound by residues histidine 643, aspartate 645, and histidine 774.

Belongs to the JHDM2-like histone demethylase family. The cofactor is Fe(2+). In terms of tissue distribution, expressed in neurons close to the dorsal lateral neurons involved in circadian rhythm.

Its subcellular location is the nucleus. The protein resides in the cytoplasm. The catalysed reaction is N(6),N(6)-dimethyl-L-lysyl(9)-[histone H3] + 2 2-oxoglutarate + 2 O2 = L-lysyl(9)-[histone H3] + 2 formaldehyde + 2 succinate + 2 CO2. Functionally, histone demethylase that specifically demethylates 'Lys-10' of histone H3 (H3K9), thereby playing a central role in histone code. Demethylation of Lys residue generates formaldehyde and succinate. Probably involved in regulation of chromatin structure, promoting expansion of euchromatin. Negatively regulates rhino-dependent piRNA production capacity of several genomic regions; may help define the frontiers of piRNA clusters by regulating histone methylation levels. May be involved in regulation of behavior and circadian rhythms. The protein is Lysine-specific demethylase 3 of Drosophila melanogaster (Fruit fly).